Consider the following 99-residue polypeptide: Acylphosphatase-1 (99 aa).

Position 2 is an N-acetylalanine (Ala2). In terms of domain architecture, Acylphosphatase-like spans 9 to 99; the sequence is SVDYEIFGKV…LDYSDFQIVK (91 aa). Active-site residues include Arg24 and Asn42.

This sequence belongs to the acylphosphatase family.

It catalyses the reaction an acyl phosphate + H2O = a carboxylate + phosphate + H(+). This chain is Acylphosphatase-1 (Acyp1), found in Mus musculus (Mouse).